We begin with the raw amino-acid sequence, 500 residues long: DNA double-strand break repair helicase HerA (500 aa).

ATP contacts are provided by residues Arg142, 151–156 (GSGKSN), and 459–460 (KI).

Belongs to the HerA family. As to quaternary structure, homohexamer. Forms a complex with NurA.

The catalysed reaction is Couples ATP hydrolysis with the unwinding of duplex DNA at the replication fork by translocating in the 5'-3' direction. This creates two antiparallel DNA single strands (ssDNA). The leading ssDNA polymer is the template for DNA polymerase III holoenzyme which synthesizes a continuous strand.. It carries out the reaction ATP + H2O = ADP + phosphate + H(+). The enzyme catalyses Couples ATP hydrolysis with the unwinding of duplex DNA by translocating in the 3'-5' direction.. Its activity is regulated as follows. ATPase activity is stimulated in the presence of linear double-stranded (ds)DNA. Helicase activity requires the presence of NurA. LhrC-Core (Hel112) inhibits the exonuclease activity of the HerA-NurA complex on ss- and dsDNA, has no effect on the nicking activity of NurA. Functionally, involved in DNA double-strand break (DSB) repair. Probably acts with NurA to stimulate resection of the 5' strand and produce the long 3' single-strand that is required for RadA loading. NurA and HerA together stimulate the end-resection of six nucleotides of a linear DNA substrate. Has DNA-dependent ATPase activity and bidirectional DNA helicase activity. Preferentially binds single stranded (ss)DNA, bubble and semiforked DNA substrate over other DNA molecules tested. Stimulates the exo- but not endonuclease activity of NurA. The protein is DNA double-strand break repair helicase HerA of Saccharolobus solfataricus (strain ATCC 35092 / DSM 1617 / JCM 11322 / P2) (Sulfolobus solfataricus).